Here is a 359-residue protein sequence, read N- to C-terminus: 4-galactosyl-N-acetylglucosaminide 3-alpha-L-fucosyltransferase 9 (359 aa).

Residues 1–11 lie on the Cytoplasmic side of the membrane; the sequence is MTSASKGILRP. The helical; Signal-anchor for type II membrane protein transmembrane segment at 12–32 threads the bilayer; that stretch reads FLIVCIILGCFMACLLIYIKP. The Lumenal portion of the chain corresponds to 33 to 359; that stretch reads TNSWIFSPME…VGNLEKWFWN (327 aa). Asn-62 carries N-linked (GlcNAc...) asparagine glycosylation. Residues 63 to 168 form an acceptor-binding region; that stretch reads ETTILIWVWP…RRDSDIQVPY (106 aa). Gln-75 is a binding site for a beta-D-galactosyl-(1-&gt;4)-N-acetyl-beta-D-glucosaminyl derivative. Cystine bridges form between Cys-82/Cys-335, Cys-91/Cys-338, and Cys-190/Cys-238. Residue Asn-101 is glycosylated (N-linked (GlcNAc...) asparagine). A beta-D-galactosyl-(1-&gt;4)-N-acetyl-beta-D-glucosaminyl derivative is bound at residue Glu-137. Glu-137 (nucleophile) is an active-site residue. Glu-137 is a binding site for GDP-beta-L-fucose. The N-linked (GlcNAc...) asparagine glycan is linked to Asn-153. The GDP-beta-L-fucose site is built by Tyr-168, Val-192, Ser-194, Asn-195, Arg-202, Val-226, Tyr-241, Asn-246, Tyr-252, Glu-255, and Lys-256. The donor-binding stretch occupies residues 169-326; sequence GFLTVSTNPF…NWRKDFTVNL (158 aa). The acceptor-binding stretch occupies residues 327 to 359; sequence PRFWESHACLACDHVKRHQEYKSVGNLEKWFWN.

It belongs to the glycosyltransferase 10 family. Homodimer. In terms of processing, N-glycosylated with complex-type N-glycans.

Its subcellular location is the golgi apparatus. The protein localises to the trans-Golgi network membrane. It is found in the golgi apparatus membrane. The catalysed reaction is a beta-D-galactosyl-(1-&gt;4)-N-acetyl-beta-D-glucosaminyl derivative + GDP-beta-L-fucose = a beta-D-galactosyl-(1-&gt;4)-[alpha-L-fucosyl-(1-&gt;3)]-N-acetyl-beta-D-glucosaminyl derivative + GDP + H(+). The enzyme catalyses an alpha-Neu5Ac-(2-&gt;3)-beta-D-Gal-(1-&gt;4)-beta-D-GlcNAc-(1-&gt;3)-beta-D-Gal-(1-&gt;4)-beta-D-GlcNAc derivative + GDP-beta-L-fucose = an alpha-Neu5Ac-(2-&gt;3)-beta-D-Gal-(1-&gt;4)-beta-D-GlcNAc-(1-&gt;3)-beta-D-Gal-(1-&gt;4)-[alpha-L-Fuc-(1-&gt;3)]-beta-D-GlcNAc derivative + GDP + H(+). It catalyses the reaction alpha-N-glycoloylneuraminosyl-(2-&gt;3)-beta-D-galactosyl-(1-&gt;4)-N-acetyl-beta-D-glucosaminyl-(1-&gt;3)-beta-D-galactosyl-(1-&gt;4)-N-acetyl-beta-D-glucosaminyl-(1-&gt;3)-beta-D-galactosyl-(1-&gt;4)-beta-D-glucosyl-(1&lt;-&gt;1')-ceramide + GDP-beta-L-fucose = alpha-N-glycoloylneuraminosyl-(2-&gt;3)-beta-D-galactosyl-(1-&gt;4)-N-acetyl-beta-D-glucosaminyl-(1-&gt;3)-beta-D-galactosyl-(1-&gt;4)-[alpha-L-fucosyl-(1-&gt;3)]-N-acetyl-beta-D-glucosaminyl-(1-&gt;3)-beta-D-galactosyl-(1-&gt;4)-beta-D-glucosyl-(1&lt;-&gt;1')-ceramide + GDP + H(+). It carries out the reaction alpha-D-galactosyl-(1-&gt;3)-beta-D-galactosyl-(1-&gt;4)-N-acetyl-beta-D-glucosaminyl-(1-&gt;3)-beta-D-galactosyl-(1-&gt;4)-beta-D-glucosyl-(1&lt;-&gt;1')-ceramide + GDP-beta-L-fucose = a neolactoside IV(3)-alpha-Gal,III(3)-alpha-Fuc-nLc4Cer + GDP + H(+). The catalysed reaction is a neolactoside nLc4Cer + GDP-beta-L-fucose = a neolactoside III(3)-alpha-Fuc-nLc4Cer + GDP + H(+). The enzyme catalyses an N-acetyl-alpha-neuraminyl-(2-&gt;3)-beta-D-galactosyl-(1-&gt;4)-N-acetyl-beta-D-glucosaminyl derivative + GDP-beta-L-fucose = an alpha-Neu5Ac-(2-&gt;3)-beta-D-Gal-(1-&gt;4)-[alpha-L-Fuc-(1-&gt;3)]-beta-D-GlcNAc derivative + GDP + H(+). It catalyses the reaction beta-D-Gal-(1-&gt;4)-beta-D-GlcNAc-(1-&gt;3)-beta-D-Gal-(1-&gt;4)-D-Glc + GDP-beta-L-fucose = beta-D-Gal-(1-&gt;4)-[alpha-L-Fuc-(1-&gt;3)]-beta-D-GlcNAc-(1-&gt;3)-beta-D-Gal-(1-&gt;4)-D-Glc + GDP + H(+). It carries out the reaction an alpha-L-Fuc-(1-&gt;2)-beta-D-Gal-(1-&gt;4)-beta-D-GlcNAc derivative + GDP-beta-L-fucose = an alpha-L-Fuc-(1-&gt;2)-beta-D-Gal-(1-&gt;4)-[alpha-L-Fuc-(1-&gt;3)]-beta-D-GlcNAc derivative + GDP + H(+). It functions in the pathway protein modification; protein glycosylation. It participates in glycolipid biosynthesis. Activated by Mn2+. Its function is as follows. Catalyzes alpha(1-&gt;3) linkage of fucosyl moiety transferred from GDP-beta-L-fucose to N-acetyl glucosamine (GlcNAc) within type 2 lactosamine (LacNAc, beta-D-Gal-(1-&gt;4)-beta-D-GlcNAc-) glycan attached to glycolipids and N- or O-linked glycoproteins. Fucosylates distal type 2 LacNAc and its fucosylated (H-type 2 LacNAc) and sialylated (sialyl-type 2 LacNAc) derivatives to form Lewis x (Lex) (CD15) and Lewis y (Ley) antigenic epitopes involved in cell adhesion and differentiation. Generates Lex epitopes in the brain, presumably playing a role in the maintenance of neuronal stemness and neurite outgrowth in progenitor neural cells. Fucosylates the internal type 2 LacNAc unit of the polylactosamine chain to form VIM-2 antigen that serves as recognition epitope for SELE. Can also modify milk oligosaccharides in particular type 2 tetrasaccharide LNnT. The polypeptide is 4-galactosyl-N-acetylglucosaminide 3-alpha-L-fucosyltransferase 9 (Canis lupus familiaris (Dog)).